Here is a 47-residue protein sequence, read N- to C-terminus: Snake venom metalloproteinase jararafibrase-4 (47 aa).

One can recognise a Peptidase M12B domain in the interval R6–L47. Ca(2+) is bound at residue E9.

The protein belongs to the venom metalloproteinase (M12B) family. Monomer. Zn(2+) is required as a cofactor. As to expression, expressed by the venom gland.

It is found in the secreted. Its activity is regulated as follows. Inhibited by 1,10-phenanthroline and EDTA. In terms of biological role, the metalloproteinase is a probable venom zinc protease that induces local hemorrhage in the skin of rats. Degrades type-IV collagen, gelatin, laminin and fibronectin. Has fibrinolytic activities. Has high hemagglutinating activity on red blood cells. Cleaves insulin B chain at 29-His-|-Leu-30, and 38-Ala-|-Leu-39 bonds. This is Snake venom metalloproteinase jararafibrase-4 from Bothrops jararaca (Jararaca).